The primary structure comprises 298 residues: MLYQQISQNKQRTVVLLVVFFALLALIGASAGYLLLDNYAMGLVLALVIGVIYATSMIFQSTSLVMSMNNAREVTEKEAPGFFHIVEDMAMVAQIPMPRVFIIEDPSLNAFATGSSPQNAAVAATTGLLEVMNREELEGVIGHEISHIRNYDIRISTIAVALASAVTVISSIGGRMLWYGGGSRRQRDDGDDDVLRIITLLLSLLSLLLAPLVASLIQLAISRQREYLADASSVELTRNPQGMIKALEKLQLSQPMKHPVDDASAALYINEPRKKRSFSSLFSTHPPIEERIERLKNM.

A run of 2 helical transmembrane segments spans residues Val-14–Leu-34 and Tyr-39–Phe-59. His-143 serves as a coordination point for Zn(2+). Glu-144 is a catalytic residue. Position 147 (His-147) interacts with Zn(2+). 2 helical membrane-spanning segments follow: residues Ile-158 to Trp-178 and Ile-197 to Ile-217. Residue Glu-226 coordinates Zn(2+).

It belongs to the peptidase M48B family. Zn(2+) is required as a cofactor.

The protein localises to the cell membrane. The sequence is that of Protease HtpX homolog from Streptococcus pyogenes serotype M1.